A 147-amino-acid chain; its full sequence is MVVVGKTSAIAAGVCGALFLGYCIYFDRKRRSDPNFKNRLREKRRKQKIAKERAGQSRLPDLKDAEAVQKFFLEEIQLGEELLAQGDFEKGVDHLTNAIAICGQPQQLLQVLQQTLPPPVFQMLLTKLPTINQRIGNAQNLAEDDVE.

Residues 1–3 (MVV) lie on the Mitochondrial intermembrane side of the membrane. Residues 4 to 26 (VGKTSAIAAGVCGALFLGYCIYF) form a helical membrane-spanning segment. Over 27-147 (DRKRRSDPNF…AQNLAEDDVE (121 aa)) the chain is Cytoplasmic.

Belongs to the Tom20 family. In terms of assembly, forms part of the preprotein translocase complex of the outer mitochondrial membrane (TOM complex). Interacts with tom22.

Its subcellular location is the mitochondrion outer membrane. Functionally, central component of the receptor complex responsible for the recognition and translocation of cytosolically synthesized mitochondrial preproteins. Together with tom22 functions as the transit peptide receptor at the surface of the mitochondrion outer membrane and facilitates the movement of preproteins into the tom40 translocation pore. The sequence is that of Mitochondrial import receptor subunit TOM20 homolog (tomm20) from Xenopus tropicalis (Western clawed frog).